A 650-amino-acid polypeptide reads, in one-letter code: Amyloid beta precursor like protein 1 (650 aa).

Positions 1–38 (MGPASPAARGLSRRPGQPPLPLLLPLLLLLLRAQPAIG) are cleaved as a signal peptide. Residues 39-580 (SLAGGSPGAA…APAGTGVSRE (542 aa)) are Extracellular-facing. The segment at 50–146 (APGSAQVAGL…PFRCLPGEFV (97 aa)) is GFLD subdomain. The region spanning 50-212 (APGSAQVAGL…RGVEYVCCPP (163 aa)) is the E1 domain. Intrachain disulfides connect cysteine 60–cysteine 84, cysteine 95–cysteine 140, cysteine 120–cysteine 128, cysteine 156–cysteine 210, cysteine 167–cysteine 197, and cysteine 181–cysteine 209. Positions 154–212 (EGCRFLHQERMDQCESSTRRHQEAQEACSSQGLILHGSGMLLPCGSDRFRGVEYVCCPP) are cuBD subdomain. Position 174 (histidine 174) interacts with Cu(2+). Residues glutamate 206, cysteine 209, and cysteine 210 each contribute to the Zn(2+) site. The tract at residues 214-287 (GTPDPSGTAV…LAVVGKVTPT (74 aa)) is disordered. A glycan (O-linked (GalNAc...) threonine) is linked at threonine 215. O-linked (GalNAc...) serine glycosylation is present at serine 227. Threonine 228 carries O-linked (GalNAc...) threonine glycosylation. The tract at residues 285–305 (TPTPRPTDGVDIYFGMPGEIS) is O-glycosylated at three sites. Positions 293–484 (GVDIYFGMPG…QELRPQIQEL (192 aa)) constitute an E2 domain. Heparin-binding stretches follow at residues 310 to 342 (FLRA…SKNL) and 410 to 441 (LLAL…DPEK). N-linked (GlcNAc...) asparagine glycosylation occurs at asparagine 337. Residues 442-459 (AQQMRFQVHTHLQVIEER) are collagen-binding. Asparagine 461 carries an N-linked (GlcNAc...) asparagine glycan. A disordered region spans residues 492–546 (PSELEAPAPGGSSEDKGGLQPPDSKDDTPMTLPKGSTEQDAASPEKEKMNPLEQY). 2 stretches are compositionally biased toward basic and acidic residues: residues 504-519 (SEDK…KDDT) and 534-546 (SPEK…LEQY). Residue asparagine 551 is glycosylated (N-linked (GlcNAc...) asparagine). Histidine 561 provides a ligand contact to Cu(2+). Histidine 561 serves as a coordination point for Zn(2+). Residues 581–603 (AVSGLLIMGAGGGSLIVLSMLLL) traverse the membrane as a helical segment. Positions 604–615 (RRKKPYGAISHG) match the Basolateral sorting signal motif. At 604–650 (RRKKPYGAISHGVVEVDPMLTLEEQQLRELQRHGYENPTYRFLEERP) the chain is on the cytoplasmic side. The interaction with DAB1 stretch occupies residues 632-649 (ELQRHGYENPTYRFLEER). The interval 636-650 (HGYENPTYRFLEERP) is interaction with DAB2. Residues 640–643 (NPTY) carry the Clathrin-binding motif. Residues 640 to 643 (NPTY) carry the NPXY motif; contains endocytosis signal motif.

The protein belongs to the APP family. In terms of assembly, monomer and homodimer. Heparin binding promotes homodimerization. Binds, via its C-terminus, to the PID domain of several cytoplasmic proteins, including APBB and APBA family members, MAPK8IP1 and DAB1. Binding to Dab1 inhibits its serine phosphorylation. Interacts with CPEB1. Interacts (via NPXY motif) with DAB2 (via PID domain); the interaction is impaired by tyrosine phosphorylation of the NPXY motif. Interacts (via NPXY motif) with DAB1. In terms of processing, proteolytically cleaved by caspases during neuronal apoptosis. Cleaved, in vitro, at Asp-620 by caspase-3. Post-translationally, N- and O-glycosylated. O-glycosylation with core 1 or possibly core 8 glycans. Glycosylation on Ser-227 is the preferred site to Thr-228. As to expression, expressed in the cerebral cortex where it is localized to the postsynaptic density (PSD).

It is found in the cell membrane. It localises to the cytoplasm. In terms of biological role, may play a role in postsynaptic function. The C-terminal gamma-secretase processed fragment, ALID1, activates transcription activation through APBB1 (Fe65) binding. Couples to JIP signal transduction through C-terminal binding. May interact with cellular G-protein signaling pathways. Can regulate neurite outgrowth through binding to components of the extracellular matrix such as heparin and collagen I. Its function is as follows. The gamma-CTF peptide, C30, is a potent enhancer of neuronal apoptosis. The protein is Amyloid beta precursor like protein 1 (APLP1) of Homo sapiens (Human).